We begin with the raw amino-acid sequence, 502 residues long: Probable cytochrome P450 28d1 (502 aa).

Cysteine 446 is a heme binding site.

Belongs to the cytochrome P450 family. Requires heme as cofactor.

The protein resides in the endoplasmic reticulum membrane. The protein localises to the microsome membrane. Functionally, may be involved in the metabolism of insect hormones and in the breakdown of synthetic insecticides. In Drosophila melanogaster (Fruit fly), this protein is Probable cytochrome P450 28d1 (Cyp28d1).